The following is a 364-amino-acid chain: Caffeic acid 3-O-methyltransferase (364 aa).

Residue 131–137 participates in substrate binding; the sequence is MNQDKVL. The segment at 163–181 is substrate binding; sequence AFEYHGTDSRFNRVFNEGM. Residues Gly209, Asp232, Asp252, Met253, and Lys266 each coordinate S-adenosyl-L-methionine. Residue His270 is the Proton acceptor of the active site.

Belongs to the class I-like SAM-binding methyltransferase superfamily. Cation-independent O-methyltransferase family. COMT subfamily. As to quaternary structure, homodimer. In terms of tissue distribution, confined to the vascular tissues of organs undergoing lignification such as stems and roots.

The enzyme catalyses (E)-caffeate + S-adenosyl-L-methionine = (E)-ferulate + S-adenosyl-L-homocysteine + H(+). It carries out the reaction tricetin + 2 S-adenosyl-L-methionine = 3',5'-di-O-methyltricetin + 2 S-adenosyl-L-homocysteine + 2 H(+). It catalyses the reaction luteolin + S-adenosyl-L-methionine = chrysoeriol + S-adenosyl-L-homocysteine + H(+). The catalysed reaction is tricetin + S-adenosyl-L-methionine = 3'-O-methyltricetin + S-adenosyl-L-homocysteine + H(+). It functions in the pathway aromatic compound metabolism; phenylpropanoid biosynthesis. Functionally, catalyzes the conversion of caffeic acid to ferulic acid and of 5-hydroxyferulic acid to sinapic acid. The resulting products may subsequently be converted to the corresponding alcohols that are incorporated into lignins. Can use the flavone tricetin (5,7,3',4',5'-pentahydroxyflavone) as the preferred substrate and give rise to its 3',5'-dimethyl derivative, tricin (3',5'-dimethoxy-5,7,4'-trihydroxyflavone), as the major product, and selgin to a lower extent. Tricin exhibits potential benefits for human health including relaxant effect on smooth muscle of intestinal tissues, antioxidant effect, antihistaminic activity, and growth inhibition of human malignant breast tumor cells and colon cancer cells. Can also use luteolin, quercetin and 5-hydroxyferulic acid (5HF) as substrates. This chain is Caffeic acid 3-O-methyltransferase, found in Zea mays (Maize).